Reading from the N-terminus, the 133-residue chain is Large ribosomal subunit protein uL16 (133 aa).

It belongs to the universal ribosomal protein uL16 family. In terms of assembly, part of the 50S ribosomal subunit.

In terms of biological role, binds 23S rRNA and is also seen to make contacts with the A and possibly P site tRNAs. This Blochmanniella floridana protein is Large ribosomal subunit protein uL16.